The chain runs to 148 residues: Ferredoxin-thioredoxin reductase catalytic chain, chloroplastic (148 aa).

The N-terminal 35 residues, methionine 1–lysine 35, are a transit peptide targeting the chloroplast. Cysteine 87 serves as a coordination point for [4Fe-4S] cluster. Cysteine 89 (nucleophile) is an active-site residue. A disulfide bridge links cysteine 89 with cysteine 119. Residues cysteine 106, cysteine 108, and cysteine 117 each contribute to the [4Fe-4S] cluster site.

It belongs to the ferredoxin thioredoxin reductase beta subunit family. In terms of assembly, heterodimer of subunit A (variable subunit) and subunit B (catalytic subunit). Heterodimeric FTR forms a complex with ferredoxin and thioredoxin. [4Fe-4S] cluster is required as a cofactor.

The protein localises to the plastid. It localises to the chloroplast. It catalyses the reaction [thioredoxin]-disulfide + 2 reduced [2Fe-2S]-[ferredoxin] + 2 H(+) = [thioredoxin]-dithiol + 2 oxidized [2Fe-2S]-[ferredoxin]. In terms of biological role, catalytic subunit of the ferredoxin-thioredoxin reductase (FTR), which catalyzes the two-electron reduction of thioredoxins by the electrons provided by reduced ferredoxin. The protein is Ferredoxin-thioredoxin reductase catalytic chain, chloroplastic of Spinacia oleracea (Spinach).